Consider the following 358-residue polypeptide: Alanine racemase (358 aa).

Lys35 acts as the Proton acceptor; specific for D-alanine in catalysis. Position 35 is an N6-(pyridoxal phosphate)lysine (Lys35). A substrate-binding site is contributed by Arg130. The active-site Proton acceptor; specific for L-alanine is Tyr255. Substrate is bound at residue Met303.

The protein belongs to the alanine racemase family. Requires pyridoxal 5'-phosphate as cofactor.

It catalyses the reaction L-alanine = D-alanine. Its pathway is amino-acid biosynthesis; D-alanine biosynthesis; D-alanine from L-alanine: step 1/1. Its function is as follows. Catalyzes the interconversion of L-alanine and D-alanine. May also act on other amino acids. The sequence is that of Alanine racemase (alr) from Shewanella sp. (strain MR-4).